Reading from the N-terminus, the 129-residue chain is NADH-quinone oxidoreductase subunit A (129 aa).

Helical transmembrane passes span 9–29, 68–88, and 97–117; these read FPIG…LGLA, LLFI…VLLL, and LGWP…AGLV.

Belongs to the complex I subunit 3 family. As to quaternary structure, NDH-1 is composed of 14 different subunits. Subunits NuoA, H, J, K, L, M, N constitute the membrane sector of the complex.

Its subcellular location is the cell inner membrane. The enzyme catalyses a quinone + NADH + 5 H(+)(in) = a quinol + NAD(+) + 4 H(+)(out). Its function is as follows. NDH-1 shuttles electrons from NADH, via FMN and iron-sulfur (Fe-S) centers, to quinones in the respiratory chain. The immediate electron acceptor for the enzyme in this species is believed to be ubiquinone. Couples the redox reaction to proton translocation (for every two electrons transferred, four hydrogen ions are translocated across the cytoplasmic membrane), and thus conserves the redox energy in a proton gradient. The chain is NADH-quinone oxidoreductase subunit A from Anaeromyxobacter dehalogenans (strain 2CP-C).